Consider the following 506-residue polypeptide: uncharacterized protein (506 aa).

The protein to group II intron maturases.

It localises to the plastid. The protein localises to the chloroplast. This is an uncharacterized protein from Euglena gracilis.